Consider the following 73-residue polypeptide: Disintegrin trigramin-beta-2 (73 aa).

Residues 1–73 (EAGKDCDCGS…AGCPRNPFHA (73 aa)) enclose the Disintegrin domain. 6 cysteine pairs are disulfide-bonded: Cys-6–Cys-21, Cys-8–Cys-16, Cys-15–Cys-38, Cys-29–Cys-35, Cys-34–Cys-59, and Cys-47–Cys-66. Residues 51 to 53 (RGD) carry the Cell attachment site motif.

This sequence belongs to the venom metalloproteinase (M12B) family. P-II subfamily. P-IIa sub-subfamily. As to quaternary structure, monomer (disintegrin). In terms of tissue distribution, expressed by the venom gland.

The protein resides in the secreted. Functionally, inhibits fibrinogen interaction with platelets. Acts by binding to the alpha-IIb/beta-3 receptor (ITGA2B/ITGB3) on the platelet surface and inhibits aggregation induced by ADP, thrombin, platelet-activating factor and collagen. This Craspedocephalus gramineus (Bamboo pit viper) protein is Disintegrin trigramin-beta-2.